The primary structure comprises 121 residues: ATP synthase epsilon chain (121 aa).

The protein belongs to the ATPase epsilon chain family. In terms of assembly, F-type ATPases have 2 components, CF(1) - the catalytic core - and CF(0) - the membrane proton channel. CF(1) has five subunits: alpha(3), beta(3), gamma(1), delta(1), epsilon(1). CF(0) has three main subunits: a, b and c.

It localises to the cell membrane. Functionally, produces ATP from ADP in the presence of a proton gradient across the membrane. The protein is ATP synthase epsilon chain of Mycobacterium marinum (strain ATCC BAA-535 / M).